A 105-amino-acid polypeptide reads, in one-letter code: Replication restart protein PriB (105 aa).

The SSB domain occupies 1-102 (MTANRLTLSG…LHAEQIELID (102 aa)).

Belongs to the PriB family. Homodimer. Interacts with PriA and DnaT. Component of the replication restart primosome. Primosome assembly occurs via a 'hand-off' mechanism. PriA binds to replication forks, subsequently PriB then DnaT bind; DnaT then displaces ssDNA to generate the helicase loading substrate.

Involved in the restart of stalled replication forks, which reloads the replicative helicase on sites other than the origin of replication; the PriA-PriB pathway is the major replication restart pathway. During primosome assembly it facilitates complex formation between PriA and DnaT on DNA; stabilizes PriA on DNA. Stimulates the DNA unwinding activity of PriA helicase. The protein is Replication restart protein PriB of Erwinia tasmaniensis (strain DSM 17950 / CFBP 7177 / CIP 109463 / NCPPB 4357 / Et1/99).